The following is a 119-amino-acid chain: uncharacterized protein (119 aa).

Positions Met1–Leu20 are disordered. The helical transmembrane segment at Leu74–Trp94 threads the bilayer.

Its subcellular location is the membrane. This is an uncharacterized protein from Saccharomyces cerevisiae (strain ATCC 204508 / S288c) (Baker's yeast).